The sequence spans 340 residues: Immunoglobulin-binding protein 1 family member C (340 aa).

2 disordered regions span residues 223-243 (KDSS…PPMK) and 292-340 (PEEF…QNMG). The segment covering 303–314 (EDQEKEEEDDEQ) has biased composition (acidic residues). A compositionally biased stretch (basic and acidic residues) spans 318 to 330 (RAREWDDWKDTHP).

The protein belongs to the IGBP1/TAP42 family.

The chain is Immunoglobulin-binding protein 1 family member C from Homo sapiens (Human).